Reading from the N-terminus, the 617-residue chain is Dihydroxy-acid dehydratase (617 aa).

D81 contributes to the Mg(2+) binding site. C122 contacts [2Fe-2S] cluster. Residues D123 and K124 each contribute to the Mg(2+) site. K124 is subject to N6-carboxylysine. A [2Fe-2S] cluster-binding site is contributed by C195. E491 contacts Mg(2+). Residue S517 is the Proton acceptor of the active site.

This sequence belongs to the IlvD/Edd family. In terms of assembly, homodimer. [2Fe-2S] cluster serves as cofactor. Requires Mg(2+) as cofactor.

The enzyme catalyses (2R)-2,3-dihydroxy-3-methylbutanoate = 3-methyl-2-oxobutanoate + H2O. It carries out the reaction (2R,3R)-2,3-dihydroxy-3-methylpentanoate = (S)-3-methyl-2-oxopentanoate + H2O. Its pathway is amino-acid biosynthesis; L-isoleucine biosynthesis; L-isoleucine from 2-oxobutanoate: step 3/4. It participates in amino-acid biosynthesis; L-valine biosynthesis; L-valine from pyruvate: step 3/4. Its function is as follows. Functions in the biosynthesis of branched-chain amino acids. Catalyzes the dehydration of (2R,3R)-2,3-dihydroxy-3-methylpentanoate (2,3-dihydroxy-3-methylvalerate) into 2-oxo-3-methylpentanoate (2-oxo-3-methylvalerate) and of (2R)-2,3-dihydroxy-3-methylbutanoate (2,3-dihydroxyisovalerate) into 2-oxo-3-methylbutanoate (2-oxoisovalerate), the penultimate precursor to L-isoleucine and L-valine, respectively. This is Dihydroxy-acid dehydratase from Rhodospirillum rubrum (strain ATCC 11170 / ATH 1.1.1 / DSM 467 / LMG 4362 / NCIMB 8255 / S1).